We begin with the raw amino-acid sequence, 531 residues long: Ribosomal protein uS12 methylthiotransferase RimO (531 aa).

Composition is skewed to polar residues over residues Met-1–Ala-19 and His-55–Val-67. The segment at Met-1 to Thr-77 is disordered. Over residues Val-68–Thr-77 the composition is skewed to low complexity. The 111-residue stretch at Pro-88–Pro-198 folds into the MTTase N-terminal domain. [4Fe-4S] cluster-binding residues include Cys-97, Cys-133, Cys-162, Cys-236, Cys-240, and Cys-243. The Radical SAM core domain maps to Leu-222–Gln-459. Positions Gln-462–Gly-531 constitute a TRAM domain.

It belongs to the methylthiotransferase family. RimO subfamily. [4Fe-4S] cluster serves as cofactor.

It is found in the cytoplasm. It carries out the reaction L-aspartate(89)-[ribosomal protein uS12]-hydrogen + (sulfur carrier)-SH + AH2 + 2 S-adenosyl-L-methionine = 3-methylsulfanyl-L-aspartate(89)-[ribosomal protein uS12]-hydrogen + (sulfur carrier)-H + 5'-deoxyadenosine + L-methionine + A + S-adenosyl-L-homocysteine + 2 H(+). Functionally, catalyzes the methylthiolation of an aspartic acid residue of ribosomal protein uS12. The sequence is that of Ribosomal protein uS12 methylthiotransferase RimO from Psychrobacter cryohalolentis (strain ATCC BAA-1226 / DSM 17306 / VKM B-2378 / K5).